Here is a 130-residue protein sequence, read N- to C-terminus: Large ribosomal subunit protein bL19 (130 aa).

Belongs to the bacterial ribosomal protein bL19 family.

Its function is as follows. This protein is located at the 30S-50S ribosomal subunit interface and may play a role in the structure and function of the aminoacyl-tRNA binding site. This Burkholderia vietnamiensis (strain G4 / LMG 22486) (Burkholderia cepacia (strain R1808)) protein is Large ribosomal subunit protein bL19.